The chain runs to 443 residues: Major royal jelly protein 7 (443 aa).

The signal sequence occupies residues 1-17 (MTRWLFMVACLGIACQG). Residues Asn-145, Asn-161, Asn-178, and Asn-321 are each glycosylated (N-linked (GlcNAc...) asparagine).

It belongs to the major royal jelly protein family. Found in and secreted from the hypopharyngeal glands of the worker honey bee (at protein level); expression peaks at 12 days post eclosion. Expressed in the brains of adult worker bees peaking at 12 days post eclosion (at protein level). Expressed in the spermatheca of adult queen bees (at protein level); Expression levels are higher in mated queens than in virgin queens.

The protein resides in the secreted. Its function is as follows. Component of royal jelly, a substance produced in the hypopharyngeal gland containing proteins, free amino acids, fatty acids, sugars and other nutrients, which is fed to developing larvae by worker nurse bees. All larvae are fed some royal jelly (also known as worker jelly) early in their development but it forms the principal source of nutrition for larvae destined to become queen bees. Produced in the spermatheca of adult queen bees, along with other major royal jelly proteins, where it may act as a nutrient supply for sperm stored by mated queens, or be involved in energy metabolism. This is Major royal jelly protein 7 from Apis mellifera (Honeybee).